We begin with the raw amino-acid sequence, 158 residues long: Cyclic pyranopterin monophosphate synthase (158 aa).

Residues 76–78 (LCH) and 114–115 (ME) each bind substrate. Residue aspartate 129 is part of the active site.

This sequence belongs to the MoaC family. As to quaternary structure, homohexamer; trimer of dimers.

It catalyses the reaction (8S)-3',8-cyclo-7,8-dihydroguanosine 5'-triphosphate = cyclic pyranopterin phosphate + diphosphate. The protein operates within cofactor biosynthesis; molybdopterin biosynthesis. Functionally, catalyzes the conversion of (8S)-3',8-cyclo-7,8-dihydroguanosine 5'-triphosphate to cyclic pyranopterin monophosphate (cPMP). This chain is Cyclic pyranopterin monophosphate synthase, found in Brucella anthropi (strain ATCC 49188 / DSM 6882 / CCUG 24695 / JCM 21032 / LMG 3331 / NBRC 15819 / NCTC 12168 / Alc 37) (Ochrobactrum anthropi).